Reading from the N-terminus, the 214-residue chain is Thymidylate kinase (214 aa).

Residue 10 to 17 (GGEGAGKS) participates in ATP binding.

Belongs to the thymidylate kinase family.

It catalyses the reaction dTMP + ATP = dTDP + ADP. Functionally, phosphorylation of dTMP to form dTDP in both de novo and salvage pathways of dTTP synthesis. The sequence is that of Thymidylate kinase from Brucella suis (strain ATCC 23445 / NCTC 10510).